Reading from the N-terminus, the 262-residue chain is Hydroxyethylthiazole kinase (262 aa).

Met50 is a substrate binding site. ATP is bound by residues Arg125 and Thr171. Gly198 is a substrate binding site.

This sequence belongs to the Thz kinase family. Mg(2+) is required as a cofactor.

The catalysed reaction is 5-(2-hydroxyethyl)-4-methylthiazole + ATP = 4-methyl-5-(2-phosphooxyethyl)-thiazole + ADP + H(+). The protein operates within cofactor biosynthesis; thiamine diphosphate biosynthesis; 4-methyl-5-(2-phosphoethyl)-thiazole from 5-(2-hydroxyethyl)-4-methylthiazole: step 1/1. In terms of biological role, catalyzes the phosphorylation of the hydroxyl group of 4-methyl-5-beta-hydroxyethylthiazole (THZ). This Escherichia coli O6:K15:H31 (strain 536 / UPEC) protein is Hydroxyethylthiazole kinase.